The chain runs to 878 residues: Phosphoenolpyruvate carboxylase (878 aa).

Residues histidine 137 and lysine 545 contribute to the active site.

Belongs to the PEPCase type 1 family. Mg(2+) serves as cofactor.

The catalysed reaction is oxaloacetate + phosphate = phosphoenolpyruvate + hydrogencarbonate. In terms of biological role, forms oxaloacetate, a four-carbon dicarboxylic acid source for the tricarboxylic acid cycle. In Yersinia pestis bv. Antiqua (strain Antiqua), this protein is Phosphoenolpyruvate carboxylase.